A 708-amino-acid polypeptide reads, in one-letter code: Ubiquitin thioesterase ZRANB1 (708 aa).

The segment at glutamate 3–serine 33 adopts a RanBP2-type 1 zinc-finger fold. Cysteine 10, cysteine 13, cysteine 24, and cysteine 27 together coordinate Zn(2+). Positions threonine 38–arginine 73 are disordered. RanBP2-type zinc fingers lie at residues asparagine 84–threonine 113 and arginine 149–asparagine 178. Positions 90, 93, 104, 107, 155, 158, 169, and 172 each coordinate Zn(2+). A disordered region spans residues arginine 200 to glutamate 225. A compositionally biased stretch (polar residues) spans serine 206–arginine 215. ANK repeat units follow at residues lysine 260–aspartate 290 and tyrosine 313–alanine 340. A TRAF-binding region spans residues proline 392 to glutamate 641. The OTU domain maps to leucine 432–methionine 592. Cysteine 443 (nucleophile) is an active-site residue. Histidine 585 functions as the Proton acceptor in the catalytic mechanism.

This sequence belongs to the peptidase C64 family. Interacts with TRAF6. Interacts with APC. As to expression, widely expressed.

Its subcellular location is the cytoplasm. It localises to the nucleus. The enzyme catalyses Thiol-dependent hydrolysis of ester, thioester, amide, peptide and isopeptide bonds formed by the C-terminal Gly of ubiquitin (a 76-residue protein attached to proteins as an intracellular targeting signal).. Its function is as follows. Ubiquitin thioesterase, which specifically hydrolyzes 'Lys-29'-linked and 'Lys-33'-linked diubiquitin. Also cleaves 'Lys-63'-linked chains, but with 40-fold less efficiency compared to 'Lys-29'-linked ones. Positive regulator of the Wnt signaling pathway that deubiquitinates APC protein, a negative regulator of Wnt-mediated transcription. Acts as a regulator of autophagy by mediating deubiquitination of PIK3C3/VPS34, thereby promoting autophagosome maturation. Plays a role in the regulation of cell morphology and cytoskeletal organization. Required in the stress fiber dynamics and cell migration. The protein is Ubiquitin thioesterase ZRANB1 of Homo sapiens (Human).